A 153-amino-acid chain; its full sequence is Mediator of RNA polymerase II transcription subunit 22 (153 aa).

It belongs to the Mediator complex subunit 22 family. In terms of assembly, component of the Mediator complex.

The protein resides in the nucleus. Functionally, component of the Mediator complex, a coactivator involved in the regulated transcription of nearly all RNA polymerase II-dependent genes. Mediator functions as a bridge to convey information from gene-specific regulatory proteins to the basal RNA polymerase II transcription machinery. Mediator is recruited to promoters by direct interactions with regulatory proteins and serves as a scaffold for the assembly of a functional preinitiation complex with RNA polymerase II and the general transcription factors. The protein is Mediator of RNA polymerase II transcription subunit 22 (mdt-22) of Caenorhabditis briggsae.